The primary structure comprises 1416 residues: DNA-directed RNA polymerase subunit beta' (1416 aa).

Residues Cys68, Cys70, Cys83, and Cys86 each contribute to the Zn(2+) site. Residues Asp458, Asp460, and Asp462 each contribute to the Mg(2+) site. The Zn(2+) site is built by Cys811, Cys884, Cys891, and Cys894.

It belongs to the RNA polymerase beta' chain family. As to quaternary structure, the RNAP catalytic core consists of 2 alpha, 1 beta, 1 beta' and 1 omega subunit. When a sigma factor is associated with the core the holoenzyme is formed, which can initiate transcription. The cofactor is Mg(2+). It depends on Zn(2+) as a cofactor.

The catalysed reaction is RNA(n) + a ribonucleoside 5'-triphosphate = RNA(n+1) + diphosphate. Functionally, DNA-dependent RNA polymerase catalyzes the transcription of DNA into RNA using the four ribonucleoside triphosphates as substrates. This Francisella philomiragia subsp. philomiragia (strain ATCC 25017 / CCUG 19701 / FSC 153 / O#319-036) protein is DNA-directed RNA polymerase subunit beta'.